We begin with the raw amino-acid sequence, 394 residues long: uncharacterized protein (394 aa).

Residues Asn-3, Asn-14, Asn-20, and Asn-25 are each glycosylated (N-linked (GlcNAc...) asparagine). Helical transmembrane passes span 64–84, 101–121, 133–153, 180–200, 228–248, and 256–276; these read AVGI…LVNI, FIWI…YIDV, IFSF…WHVI, IFVV…MGFF, VLLA…SFVY, and WVGM…QFLE. 2 N-linked (GlcNAc...) asparagine glycosylation sites follow: Asn-283 and Asn-286. A helical membrane pass occupies residues 291–311; it reads AGLVFGLGFCPPLILAYTVCI. Residue Asn-344 is glycosylated (N-linked (GlcNAc...) asparagine).

The protein resides in the membrane. This is an uncharacterized protein from Schizosaccharomyces pombe (strain 972 / ATCC 24843) (Fission yeast).